Consider the following 203-residue polypeptide: bMERB domain-containing protein 1 (203 aa).

In terms of domain architecture, bMERB spans 3 to 149; it reads LKQSLSVHLE…EQEEDKEMAD (147 aa). Residues 160 to 186 are disordered; sequence KVTKSSASSRAEKKAEPPPSKPTVAKT.

The polypeptide is bMERB domain-containing protein 1 (Bmerb1) (Rattus norvegicus (Rat)).